Here is a 219-residue protein sequence, read N- to C-terminus: Dehydration-responsive element-binding protein 1F (219 aa).

A disordered region spans residues 1-45; the sequence is MDTEDTSSASSSSVSPPSSPGGGHHHRLPPKRRAGRKKFRETRHP. Low complexity predominate over residues 7–16; the sequence is SSASSSSVSP. A compositionally biased stretch (basic residues) spans 23–41; sequence GHHHRLPPKRRAGRKKFRE. Positions 46–105 form a DNA-binding region, AP2/ERF; it reads VYRGVRARAGGSRWVCEVREPQAQARIWLGTYPTPEMAARAHDVAAIALRGERGAELNFP. Residues 134-161 are disordered; sequence RRPPPPLALPEDPQEGTSGGGATATSGR.

The protein belongs to the AP2/ERF transcription factor family. ERF subfamily. In terms of tissue distribution, mostly expressed in developing seeds and apices.

It is found in the nucleus. In terms of biological role, transcriptional activator that binds specifically to the DNA sequence 5'-[AG]CCGAC-3'. Binding to the C-repeat/DRE element mediates high salinity- and dehydration-inducible transcription. This is Dehydration-responsive element-binding protein 1F (DREB1F) from Oryza sativa subsp. indica (Rice).